Here is a 341-residue protein sequence, read N- to C-terminus: Porin-like protein L (341 aa).

Positions 1 to 21 are cleaved as a signal peptide; that stretch reads MNKKLIALAVAAASISSVATA.

This sequence belongs to the Gram-negative porin family. As to quaternary structure, homotrimer.

Its subcellular location is the cell outer membrane. In terms of biological role, forms pores that allow passive diffusion of small molecules across the outer membrane. This Photobacterium profundum (strain SS9) protein is Porin-like protein L (ompL).